The primary structure comprises 1238 residues: ATP-dependent helicase/nuclease subunit A (1238 aa).

The UvrD-like helicase ATP-binding domain maps to 12–490; it reads VSWTDDQWKA…IDLNANFRSR (479 aa). 33–40 contributes to the ATP binding site; that stretch reads AAAGSGKT. A UvrD-like helicase C-terminal domain is found at 510–818; it reads GEILYDDNAS…RLVTIHSSKG (309 aa).

It belongs to the helicase family. AddA subfamily. Heterodimer of AddA and AddB/RexB. It depends on Mg(2+) as a cofactor.

It carries out the reaction Couples ATP hydrolysis with the unwinding of duplex DNA by translocating in the 3'-5' direction.. It catalyses the reaction ATP + H2O = ADP + phosphate + H(+). The heterodimer acts as both an ATP-dependent DNA helicase and an ATP-dependent, dual-direction single-stranded exonuclease. Recognizes the chi site generating a DNA molecule suitable for the initiation of homologous recombination. The AddA nuclease domain is required for chi fragment generation; this subunit has the helicase and 3' -&gt; 5' nuclease activities. This Lysinibacillus sphaericus (strain C3-41) protein is ATP-dependent helicase/nuclease subunit A.